The primary structure comprises 237 residues: Class B acid phosphatase (237 aa).

Positions 1 to 25 are cleaved as a signal peptide; it reads MRKLTLAFAAASLLFTLNSAVVARA. Aspartate 69 serves as the catalytic Nucleophile. Mg(2+) contacts are provided by aspartate 69 and aspartate 71. The Proton donor role is filled by aspartate 71. Residues 137-138 and lysine 177 contribute to the substrate site; that span reads TG. Aspartate 192 contacts Mg(2+).

The protein belongs to the class B bacterial acid phosphatase family. In terms of assembly, homotetramer. Mg(2+) is required as a cofactor.

The protein localises to the periplasm. The catalysed reaction is a phosphate monoester + H2O = an alcohol + phosphate. Functionally, dephosphorylates several organic phosphate monoesters. Also has a phosphotransferase activity catalyzing the transfer of low-energy phosphate groups from organic phosphate monoesters to free hydroxyl groups of various organic compounds. The polypeptide is Class B acid phosphatase (Klebsiella pneumoniae (strain 342)).